The sequence spans 297 residues: Protease HtpX homolog (297 aa).

2 helical membrane passes run 14–34 (IFLILAFFFLLTAIGAAAGYL) and 39–59 (YQFGIVLALILGSIYAFSMIF). His-143 is a Zn(2+) binding site. Glu-144 is a catalytic residue. His-147 provides a ligand contact to Zn(2+). A run of 2 helical transmembrane segments spans residues 153-173 (IRISTIAVALASAITLIASMG) and 196-216 (IVFLIFSLLSLILAPLIASMV). Residue Glu-225 participates in Zn(2+) binding.

The protein belongs to the peptidase M48B family. The cofactor is Zn(2+).

The protein localises to the cell membrane. In Streptococcus uberis (strain ATCC BAA-854 / 0140J), this protein is Protease HtpX homolog.